Reading from the N-terminus, the 303-residue chain is Bifunctional protein FolD (303 aa).

NADP(+) is bound by residues 175-177 and I243; that span reads GVS.

This sequence belongs to the tetrahydrofolate dehydrogenase/cyclohydrolase family. As to quaternary structure, homodimer.

The catalysed reaction is (6R)-5,10-methylene-5,6,7,8-tetrahydrofolate + NADP(+) = (6R)-5,10-methenyltetrahydrofolate + NADPH. The enzyme catalyses (6R)-5,10-methenyltetrahydrofolate + H2O = (6R)-10-formyltetrahydrofolate + H(+). Its pathway is one-carbon metabolism; tetrahydrofolate interconversion. In terms of biological role, catalyzes the oxidation of 5,10-methylenetetrahydrofolate to 5,10-methenyltetrahydrofolate and then the hydrolysis of 5,10-methenyltetrahydrofolate to 10-formyltetrahydrofolate. This Xanthomonas euvesicatoria pv. vesicatoria (strain 85-10) (Xanthomonas campestris pv. vesicatoria) protein is Bifunctional protein FolD.